The following is a 315-amino-acid chain: Lipoyl synthase (315 aa).

[4Fe-4S] cluster-binding residues include C62, C67, C73, C88, C92, C95, and S302. The region spanning 74 to 291 (FNHGAATFMI…KKIALKLGFS (218 aa)) is the Radical SAM core domain.

It belongs to the radical SAM superfamily. Lipoyl synthase family. [4Fe-4S] cluster is required as a cofactor.

The protein localises to the cytoplasm. The catalysed reaction is [[Fe-S] cluster scaffold protein carrying a second [4Fe-4S](2+) cluster] + N(6)-octanoyl-L-lysyl-[protein] + 2 oxidized [2Fe-2S]-[ferredoxin] + 2 S-adenosyl-L-methionine + 4 H(+) = [[Fe-S] cluster scaffold protein] + N(6)-[(R)-dihydrolipoyl]-L-lysyl-[protein] + 4 Fe(3+) + 2 hydrogen sulfide + 2 5'-deoxyadenosine + 2 L-methionine + 2 reduced [2Fe-2S]-[ferredoxin]. It functions in the pathway protein modification; protein lipoylation via endogenous pathway; protein N(6)-(lipoyl)lysine from octanoyl-[acyl-carrier-protein]: step 2/2. In terms of biological role, catalyzes the radical-mediated insertion of two sulfur atoms into the C-6 and C-8 positions of the octanoyl moiety bound to the lipoyl domains of lipoate-dependent enzymes, thereby converting the octanoylated domains into lipoylated derivatives. In Ruthia magnifica subsp. Calyptogena magnifica, this protein is Lipoyl synthase.